We begin with the raw amino-acid sequence, 65 residues long: Venom protein Vn4.6 (65 aa).

An N-terminal signal peptide occupies residues 1–23 (MSKIILAIFLIVLCGLIFVTVDA).

Contains 2 disulfide bonds. Expressed by the venom gland.

The protein localises to the secreted. Endoparasitoid venom protein that interferes with the activation of host hemolymph prophenoloxidase. May act in conjunction with other venom proteins (such as Vn50), by competitive binding to the zymogen and thereby interrupting the enzyme. The chain is Venom protein Vn4.6 from Cotesia rubecula (Cabbage white butterfly parasite).